The sequence spans 269 residues: Formamidopyrimidine-DNA glycosylase (269 aa).

P2 functions as the Schiff-base intermediate with DNA in the catalytic mechanism. E3 serves as the catalytic Proton donor. Residue K57 is the Proton donor; for beta-elimination activity of the active site. DNA is bound by residues H90, R109, and K150. The FPG-type zinc-finger motif lies at 235–269; that stretch reads RVYGRNGEPCRTCGTPIETAKHGQRSTFFCRRCQV. R259 functions as the Proton donor; for delta-elimination activity in the catalytic mechanism.

This sequence belongs to the FPG family. Monomer. Requires Zn(2+) as cofactor.

It catalyses the reaction Hydrolysis of DNA containing ring-opened 7-methylguanine residues, releasing 2,6-diamino-4-hydroxy-5-(N-methyl)formamidopyrimidine.. It carries out the reaction 2'-deoxyribonucleotide-(2'-deoxyribose 5'-phosphate)-2'-deoxyribonucleotide-DNA = a 3'-end 2'-deoxyribonucleotide-(2,3-dehydro-2,3-deoxyribose 5'-phosphate)-DNA + a 5'-end 5'-phospho-2'-deoxyribonucleoside-DNA + H(+). In terms of biological role, involved in base excision repair of DNA damaged by oxidation or by mutagenic agents. Acts as a DNA glycosylase that recognizes and removes damaged bases. Has a preference for oxidized purines, such as 7,8-dihydro-8-oxoguanine (8-oxoG). Has AP (apurinic/apyrimidinic) lyase activity and introduces nicks in the DNA strand. Cleaves the DNA backbone by beta-delta elimination to generate a single-strand break at the site of the removed base with both 3'- and 5'-phosphates. The chain is Formamidopyrimidine-DNA glycosylase from Pectobacterium atrosepticum (strain SCRI 1043 / ATCC BAA-672) (Erwinia carotovora subsp. atroseptica).